Consider the following 232-residue polypeptide: tRNA (guanine-N(1)-)-methyltransferase (232 aa).

S-adenosyl-L-methionine contacts are provided by residues G112 and I132 to L137.

This sequence belongs to the RNA methyltransferase TrmD family. Homodimer.

It localises to the cytoplasm. It carries out the reaction guanosine(37) in tRNA + S-adenosyl-L-methionine = N(1)-methylguanosine(37) in tRNA + S-adenosyl-L-homocysteine + H(+). Its function is as follows. Specifically methylates guanosine-37 in various tRNAs. This Methylacidiphilum infernorum (isolate V4) (Methylokorus infernorum (strain V4)) protein is tRNA (guanine-N(1)-)-methyltransferase.